A 143-amino-acid polypeptide reads, in one-letter code: Protein SLC31A2 (143 aa).

Over 1 to 22 (MAMHFIFSDTAVLLFDFWSVHS) the chain is Extracellular. A helical transmembrane segment spans residues 23-43 (PAGMALSVLVLLLLAVLYEGI). Topologically, residues 44 to 93 (KVGKAKLLNQVLVNLPTSISQQTIAETDGDSAGSDSFPVGRTHHRWYLCH) are cytoplasmic. A Phosphoserine modification is found at Ser77. Residues 94–114 (FGQSLIHVIQVVIGYFIMLAV) form a helical membrane-spanning segment. The Extracellular segment spans residues 115–119 (MSYNT). The helical transmembrane segment at 120–140 (WIFLGVVLGSAVGYYLAYPLL) threads the bilayer. The Cytoplasmic portion of the chain corresponds to 141–143 (STA).

Belongs to the copper transporter (Ctr) (TC 1.A.56) family. SLC31A subfamily. As to quaternary structure, oligomer. Interacts with SLC31A1; this interaction stabilizes SLC31A2 and protects it from ubiquitination and the subsequent degradation. In terms of processing, ubiquitinated; ubiquitination and the subsequent proteasomal degradation are prevent by SLC31A1 that stabilizes it. As to expression, ubiquitous with high expression in placenta and heart.

It is found in the membrane. The protein resides in the cytoplasmic vesicle membrane. Its subcellular location is the late endosome membrane. It localises to the lysosome membrane. Functionally, does not function as a copper(1+) importer in vivo. However, in vitro functions as a low-affinity copper(1+) importer. Regulator of SLC31A1 which facilitates the cleavage of the SLC31A1 ecto-domain or which stabilizes the truncated form of SLC31A1 (Truncated CTR1 form), thereby drives the SLC31A1 truncated form-dependent endosomal copper export and modulates the copper and cisplatin accumulation via SLC31A1. This is Protein SLC31A2 from Homo sapiens (Human).